We begin with the raw amino-acid sequence, 202 residues long: Na(+)-translocating NADH-quinone reductase subunit E (202 aa).

The next 6 membrane-spanning stretches (helical) occupy residues 11-31 (SIFLENMALFYFLGMCTFLAV), 39-59 (MGLGVAVIVVLTISVPVNQLV), 79-99 (LSFLSFLTFIGVIAALVQILE), 114-134 (GIFLPLITVNCAIFGGVAFAV), 144-164 (IFYGAGSGAGWALAITLLAAV), and 180-200 (LGSVFMIAGLMALGFQSFSGV).

Belongs to the NqrDE/RnfAE family. As to quaternary structure, composed of six subunits; NqrA, NqrB, NqrC, NqrD, NqrE and NqrF.

It localises to the cell inner membrane. The enzyme catalyses a ubiquinone + n Na(+)(in) + NADH + H(+) = a ubiquinol + n Na(+)(out) + NAD(+). Functionally, NQR complex catalyzes the reduction of ubiquinone-1 to ubiquinol by two successive reactions, coupled with the transport of Na(+) ions from the cytoplasm to the periplasm. NqrA to NqrE are probably involved in the second step, the conversion of ubisemiquinone to ubiquinol. This Pseudoalteromonas atlantica (strain T6c / ATCC BAA-1087) protein is Na(+)-translocating NADH-quinone reductase subunit E.